The chain runs to 296 residues: MLTFQEIILKLHHYWASKGCAIVQPLDMEVGAGTFHPATTLRAIGPEPWTAAYVQPSRRPTDGRYGENPNRTQHYYQYQVVMKPSPDDIQELYLGSLRELGIDPLENDIRFVEDNWESPTLGAWGLGWEVWSNGMEITQFTYFQQVGGLECKPVMGEITYGLERLAMYIQNVDSMYDILWANTQNGPLYYRDVFLQNEVEMSTYNFEEANVEELFKQFDLLEKEGYRLVEKNLPIPAYEFVLKASHTFNLLDARHAISVTERQGYILRVRKLALEVAKEYYSAREKSGFPAFKKDN.

It belongs to the class-II aminoacyl-tRNA synthetase family. In terms of assembly, tetramer of two alpha and two beta subunits.

Its subcellular location is the cytoplasm. It catalyses the reaction tRNA(Gly) + glycine + ATP = glycyl-tRNA(Gly) + AMP + diphosphate. The chain is Glycine--tRNA ligase alpha subunit from Francisella tularensis subsp. holarctica (strain FTNF002-00 / FTA).